Consider the following 425-residue polypeptide: MDIGPKDKISNLPEALICHILSFLPIEDSALTSVLSKRWRYLFAFRPNLVFDDSVCLRPPCGHGVIPDYVTSWILNVLERGVLDLDLQVNVNGVRLPSKVFVSKSLVRLRIESGNVRGIDVDDVFLPKLKSLYLHTIMLGKGEDCFEKLTSGCHVLEELVLNNVYSNVWNRSVSSKTLKRLTLWCTESYDKNPHSVLFDTPNLVYLKYSDYVAAKYPKVNFSSLVDATIGLAMTSDQDANASYDALVGNATDFLMGICNVQILCLSANSLAVLTFCCESIPVFNNLIQLTIKTNQSVGWESLPALLKNCPILETLVFEGLLHMYTIKCGDVDGCLCKYSGEVPSCLSSSPVKVLKILRFGEYGIVNQIEMIKIFLETMPHLEQLTVYYNTPIGGDLIEEVSSQLKNFAREASPNCEIQVIPDVLS.

The 49-residue stretch at 6–54 (KDKISNLPEALICHILSFLPIEDSALTSVLSKRWRYLFAFRPNLVFDDS) folds into the F-box domain. 5 LRR repeats span residues 86–113 (DLQVNVNGVRLPSKVFVSKSLVRLRIES), 138–163 (MLGKGEDCFEKLTSGCHVLEELVLNN), 185–210 (CTESYDKNPHSVLFDTPNLVYLKYSD), 264–293 (CLSANSLAVLTFCCESIPVFNNLIQLTIKT), and 294–319 (NQSVGWESLPALLKNCPILETLVFEG).

The protein is F-box/LRR-repeat protein At3g59250 of Arabidopsis thaliana (Mouse-ear cress).